The following is a 249-amino-acid chain: ATP synthase subunit a, chloroplastic (249 aa).

Helical transmembrane passes span 40 to 60 (QVLI…VLAV), 97 to 117 (VPFI…GALL), 136 to 156 (INTT…AGLS), 201 to 221 (LVVV…VMFL), and 222 to 242 (GLFT…AYIG).

Belongs to the ATPase A chain family. As to quaternary structure, F-type ATPases have 2 components, CF(1) - the catalytic core - and CF(0) - the membrane proton channel. CF(1) has five subunits: alpha(3), beta(3), gamma(1), delta(1), epsilon(1). CF(0) has four main subunits: a, b, b' and c.

The protein resides in the plastid. Its subcellular location is the chloroplast thylakoid membrane. In terms of biological role, key component of the proton channel; it plays a direct role in the translocation of protons across the membrane. This chain is ATP synthase subunit a, chloroplastic, found in Arabis hirsuta (Hairy rock-cress).